A 576-amino-acid chain; its full sequence is Arginine--tRNA ligase (576 aa).

Positions 122–132 (PNVAKQMHVGH) match the 'HIGH' region motif.

This sequence belongs to the class-I aminoacyl-tRNA synthetase family. In terms of assembly, monomer.

Its subcellular location is the cytoplasm. The catalysed reaction is tRNA(Arg) + L-arginine + ATP = L-arginyl-tRNA(Arg) + AMP + diphosphate. The protein is Arginine--tRNA ligase of Yersinia pseudotuberculosis serotype O:1b (strain IP 31758).